Reading from the N-terminus, the 103-residue chain is MEKIRLKLRAYDHRVLDRSVSAIVEAVKRTGAEIRGPIPLPTKIRRYTVLRSPHINKDSREQFEIRIHSRLIDIVSATPDTVDSLMKLDLAPEVDVEVRSMGE.

It belongs to the universal ribosomal protein uS10 family. As to quaternary structure, part of the 30S ribosomal subunit.

In terms of biological role, involved in the binding of tRNA to the ribosomes. This Nitratiruptor sp. (strain SB155-2) protein is Small ribosomal subunit protein uS10.